The following is an 88-amino-acid chain: Ribonuclease P protein component 1 (88 aa).

This sequence belongs to the eukaryotic/archaeal RNase P protein component 1 family. In terms of assembly, consists of a catalytic RNA component and at least 4-5 protein subunits.

Its subcellular location is the cytoplasm. The enzyme catalyses Endonucleolytic cleavage of RNA, removing 5'-extranucleotides from tRNA precursor.. Part of ribonuclease P, a protein complex that generates mature tRNA molecules by cleaving their 5'-ends. This Nitrosopumilus maritimus (strain SCM1) protein is Ribonuclease P protein component 1.